The primary structure comprises 419 residues: Adenylosuccinate synthetase 1 (419 aa).

Residue 11–17 (GDEGKGK) participates in GTP binding. Aspartate 12 functions as the Proton acceptor in the catalytic mechanism. Aspartate 12 and glycine 39 together coordinate Mg(2+). IMP is bound by residues 12 to 15 (DEGK), 37 to 40 (NAGH), arginine 138, glutamine 220, and arginine 298. Histidine 40 (proton donor) is an active-site residue. A substrate-binding site is contributed by 294 to 300 (TVSKRPR). Residues arginine 300, 326 to 328 (NVD), and 407 to 409 (SYG) contribute to the GTP site.

It belongs to the adenylosuccinate synthetase family. As to quaternary structure, homodimer. The cofactor is Mg(2+).

It is found in the cytoplasm. The enzyme catalyses IMP + L-aspartate + GTP = N(6)-(1,2-dicarboxyethyl)-AMP + GDP + phosphate + 2 H(+). The protein operates within purine metabolism; AMP biosynthesis via de novo pathway; AMP from IMP: step 1/2. In terms of biological role, plays an important role in the de novo pathway of purine nucleotide biosynthesis. Catalyzes the first committed step in the biosynthesis of AMP from IMP. The sequence is that of Adenylosuccinate synthetase 1 from Photorhabdus laumondii subsp. laumondii (strain DSM 15139 / CIP 105565 / TT01) (Photorhabdus luminescens subsp. laumondii).